The primary structure comprises 153 residues: Glycosylation-dependent cell adhesion molecule 1 (153 aa).

A signal peptide spans 1–18 (MKFLCVLLLASLAATSLA). Residue threonine 34 is glycosylated (O-linked (GalNAc...) threonine; partial). Serine 47, serine 52, serine 56, serine 58, and serine 64 each carry phosphoserine. Serine 78 is a glycosylation site (O-linked (HexNAc...) serine). The N-linked (GlcNAc...) asparagine glycan is linked to asparagine 95. The segment at 95 to 115 (NATLGSEETTEHTPSDASTTE) is disordered. A glycan (O-linked (GalNAc...) threonine) is linked at threonine 104.

It belongs to the PP3/GlyCAM-1 family. Highly and specifically expressed in the lactating mammary gland.

The protein localises to the membrane. The sequence is that of Glycosylation-dependent cell adhesion molecule 1 (GLYCAM1) from Bos taurus (Bovine).